A 243-amino-acid chain; its full sequence is Endochitinase (243 aa).

3 disulfide bridges follow: Cys23–Cys85, Cys97–Cys105, and Cys223–Cys236. Residue Glu67 is the Proton donor of the active site.

Its subcellular location is the vacuole. It catalyses the reaction Random endo-hydrolysis of N-acetyl-beta-D-glucosaminide (1-&gt;4)-beta-linkages in chitin and chitodextrins.. Functionally, defense against chitin-containing fungal pathogens. Shows activity on chitin, tetra-N-acetylglucosamine and chitosan. This Carica papaya (Papaya) protein is Endochitinase.